The sequence spans 365 residues: tRNA/tmRNA (uracil-C(5))-methyltransferase (365 aa).

S-adenosyl-L-methionine-binding residues include Gln189, Tyr217, Asn222, Glu238, and Asp298. The Nucleophile role is filled by Cys323. Glu357 (proton acceptor) is an active-site residue.

This sequence belongs to the class I-like SAM-binding methyltransferase superfamily. RNA M5U methyltransferase family. TrmA subfamily.

It carries out the reaction uridine(54) in tRNA + S-adenosyl-L-methionine = 5-methyluridine(54) in tRNA + S-adenosyl-L-homocysteine + H(+). The enzyme catalyses uridine(341) in tmRNA + S-adenosyl-L-methionine = 5-methyluridine(341) in tmRNA + S-adenosyl-L-homocysteine + H(+). Dual-specificity methyltransferase that catalyzes the formation of 5-methyluridine at position 54 (m5U54) in all tRNAs, and that of position 341 (m5U341) in tmRNA (transfer-mRNA). This Shewanella sp. (strain ANA-3) protein is tRNA/tmRNA (uracil-C(5))-methyltransferase.